The following is a 112-amino-acid chain: Large ribosomal subunit protein eL30z (112 aa).

This sequence belongs to the eukaryotic ribosomal protein eL30 family.

The protein is Large ribosomal subunit protein eL30z (RPL30A) of Arabidopsis thaliana (Mouse-ear cress).